Here is a 199-residue protein sequence, read N- to C-terminus: MTKVKICGLSTKEAVETAVSAGADYIGFVFAPSKRQVTLEEAAELAKLIPADVKKVGVFVSPSRVELLEAIDKVGLDLVQVHGQVAADLFENLPCASIQAVQVDGNGHVPNSQADYLLFDAPVAGSGQSFDWGQLDTTGLAQPFFIAGGLNEDNVVKAIQHFTPYAVDVSSGVETDGQKNHEKIRRFIERVKHGISGTK.

Belongs to the TrpF family.

It carries out the reaction N-(5-phospho-beta-D-ribosyl)anthranilate = 1-(2-carboxyphenylamino)-1-deoxy-D-ribulose 5-phosphate. The protein operates within amino-acid biosynthesis; L-tryptophan biosynthesis; L-tryptophan from chorismate: step 3/5. In Streptococcus pneumoniae (strain ATCC 700669 / Spain 23F-1), this protein is N-(5'-phosphoribosyl)anthranilate isomerase.